Consider the following 673-residue polypeptide: UvrABC system protein B (673 aa).

In terms of domain architecture, Helicase ATP-binding spans Ala-26–Arg-414. Gly-39–Thr-46 contacts ATP. The short motif at Tyr-92–Ile-115 is the Beta-hairpin element. Residues Gln-431–Met-597 form the Helicase C-terminal domain. Residues Arg-601–Tyr-626 are disordered. Residues Ala-635 to Ala-670 form the UVR domain.

This sequence belongs to the UvrB family. Forms a heterotetramer with UvrA during the search for lesions. Interacts with UvrC in an incision complex.

The protein resides in the cytoplasm. Its function is as follows. The UvrABC repair system catalyzes the recognition and processing of DNA lesions. A damage recognition complex composed of 2 UvrA and 2 UvrB subunits scans DNA for abnormalities. Upon binding of the UvrA(2)B(2) complex to a putative damaged site, the DNA wraps around one UvrB monomer. DNA wrap is dependent on ATP binding by UvrB and probably causes local melting of the DNA helix, facilitating insertion of UvrB beta-hairpin between the DNA strands. Then UvrB probes one DNA strand for the presence of a lesion. If a lesion is found the UvrA subunits dissociate and the UvrB-DNA preincision complex is formed. This complex is subsequently bound by UvrC and the second UvrB is released. If no lesion is found, the DNA wraps around the other UvrB subunit that will check the other stand for damage. This Xanthomonas campestris pv. campestris (strain 8004) protein is UvrABC system protein B.